Here is a 337-residue protein sequence, read N- to C-terminus: 2-ketoarginine methyltransferase (337 aa).

This sequence belongs to the 2-ketoarginine methyltransferase family.

The catalysed reaction is 5-guanidino-2-oxopentanoate + S-adenosyl-L-methionine = (3R)-5-guanidino-3-methyl-2-oxopentanoate + S-adenosyl-L-homocysteine + H(+). Its pathway is antibiotic biosynthesis. Functionally, S-adenosyl-L-methionine-dependent methyltransferase involved in the formation of the rare amino acid 3-methylarginine (MeArg), which is incorporated into the peptidyl nucleoside antibiotic arginomycin. Transfers the methyl group from S-adenosyl-L-methionine into 5-guanidino-2-oxopentanoate acid to yield 5-guanidino-3-methyl-2-oxopentanoate, a precursor of MeArg. This is 2-ketoarginine methyltransferase from Streptomyces arginensis.